Here is a 166-residue protein sequence, read N- to C-terminus: Endoribonuclease YbeY (166 aa).

Zn(2+) is bound by residues His131, His135, and His141.

Belongs to the endoribonuclease YbeY family. Requires Zn(2+) as cofactor.

It localises to the cytoplasm. Its function is as follows. Single strand-specific metallo-endoribonuclease involved in late-stage 70S ribosome quality control and in maturation of the 3' terminus of the 16S rRNA. The chain is Endoribonuclease YbeY from Dehalococcoides mccartyi (strain CBDB1).